The following is a 327-amino-acid chain: Flotillin-like protein FloA (327 aa).

Helical transmembrane passes span 8 to 28 (VLLITGGILIFLAIFFTLVPI) and 29 to 49 (PLWISSLAAGVRVSIFTLVGM).

This sequence belongs to the flotillin-like FloA family. Homooligomerizes.

It localises to the cell membrane. Its subcellular location is the membrane raft. Found in functional membrane microdomains (FMM) that may be equivalent to eukaryotic membrane rafts. FMMs are highly dynamic and increase in number as cells age. Flotillins are thought to be important factors in membrane fluidity. This is Flotillin-like protein FloA from Exiguobacterium sibiricum (strain DSM 17290 / CCUG 55495 / CIP 109462 / JCM 13490 / 255-15).